The sequence spans 513 residues: ATP synthase subunit alpha 1 (513 aa).

Residue 169–176 (GDRQTGKT) coordinates ATP.

The protein belongs to the ATPase alpha/beta chains family. As to quaternary structure, F-type ATPases have 2 components, CF(1) - the catalytic core - and CF(0) - the membrane proton channel. CF(1) has five subunits: alpha(3), beta(3), gamma(1), delta(1), epsilon(1). CF(0) has three main subunits: a(1), b(2) and c(9-12). The alpha and beta chains form an alternating ring which encloses part of the gamma chain. CF(1) is attached to CF(0) by a central stalk formed by the gamma and epsilon chains, while a peripheral stalk is formed by the delta and b chains.

Its subcellular location is the cell inner membrane. The enzyme catalyses ATP + H2O + 4 H(+)(in) = ADP + phosphate + 5 H(+)(out). In terms of biological role, produces ATP from ADP in the presence of a proton gradient across the membrane. The alpha chain is a regulatory subunit. The sequence is that of ATP synthase subunit alpha 1 from Vibrio campbellii (strain ATCC BAA-1116).